The chain runs to 937 residues: Bifunctional glutamine synthetase adenylyltransferase/adenylyl-removing enzyme (937 aa).

Residues 1 to 436 (MSQPIPSASP…AAEFAELLAP (436 aa)) are adenylyl removase. The tract at residues 443-937 (PDTLADYWRA…QLRFQPGKGA (495 aa)) is adenylyl transferase.

This sequence belongs to the GlnE family. The cofactor is Mg(2+).

The enzyme catalyses [glutamine synthetase]-O(4)-(5'-adenylyl)-L-tyrosine + phosphate = [glutamine synthetase]-L-tyrosine + ADP. The catalysed reaction is [glutamine synthetase]-L-tyrosine + ATP = [glutamine synthetase]-O(4)-(5'-adenylyl)-L-tyrosine + diphosphate. In terms of biological role, involved in the regulation of glutamine synthetase GlnA, a key enzyme in the process to assimilate ammonia. When cellular nitrogen levels are high, the C-terminal adenylyl transferase (AT) inactivates GlnA by covalent transfer of an adenylyl group from ATP to specific tyrosine residue of GlnA, thus reducing its activity. Conversely, when nitrogen levels are low, the N-terminal adenylyl removase (AR) activates GlnA by removing the adenylyl group by phosphorolysis, increasing its activity. The regulatory region of GlnE binds the signal transduction protein PII (GlnB) which indicates the nitrogen status of the cell. The polypeptide is Bifunctional glutamine synthetase adenylyltransferase/adenylyl-removing enzyme (Xanthomonas campestris pv. campestris (strain ATCC 33913 / DSM 3586 / NCPPB 528 / LMG 568 / P 25)).